The chain runs to 125 residues: Small ribosomal subunit protein bS6 (125 aa).

The disordered stretch occupies residues 96 to 125; sequence VTEASPMKAAKEERKPLAEVENNDFEDAEE. Residues 104-113 are compositionally biased toward basic and acidic residues; sequence AAKEERKPLA. The span at 116–125 shows a compositional bias: acidic residues; sequence ENNDFEDAEE.

The protein belongs to the bacterial ribosomal protein bS6 family.

Its function is as follows. Binds together with bS18 to 16S ribosomal RNA. The protein is Small ribosomal subunit protein bS6 of Haemophilus influenzae (strain 86-028NP).